Here is a 149-residue protein sequence, read N- to C-terminus: Nucleoside diphosphate kinase (149 aa).

ATP-binding residues include Lys-9, Phe-57, Arg-85, Thr-91, Arg-102, and Asn-112. The active-site Pros-phosphohistidine intermediate is the His-115.

Belongs to the NDK family. As to quaternary structure, homotetramer. Mg(2+) is required as a cofactor.

It is found in the cytoplasm. It catalyses the reaction a 2'-deoxyribonucleoside 5'-diphosphate + ATP = a 2'-deoxyribonucleoside 5'-triphosphate + ADP. It carries out the reaction a ribonucleoside 5'-diphosphate + ATP = a ribonucleoside 5'-triphosphate + ADP. Major role in the synthesis of nucleoside triphosphates other than ATP. The ATP gamma phosphate is transferred to the NDP beta phosphate via a ping-pong mechanism, using a phosphorylated active-site intermediate. This Desulforamulus reducens (strain ATCC BAA-1160 / DSM 100696 / MI-1) (Desulfotomaculum reducens) protein is Nucleoside diphosphate kinase.